The following is a 640-amino-acid chain: Putative GTPase-activating protein C1620.12c (640 aa).

The segment at glutamine 96 to isoleucine 120 is disordered. Residues serine 109–isoleucine 120 are compositionally biased toward low complexity. Positions cysteine 215–glycine 408 constitute a Rab-GAP TBC domain. Residues arginine 500–glutamate 636 adopt a coiled-coil conformation.

The protein belongs to the GYP5 family.

The protein localises to the nucleus. Its subcellular location is the cytoplasm. The polypeptide is Putative GTPase-activating protein C1620.12c (Schizosaccharomyces pombe (strain 972 / ATCC 24843) (Fission yeast)).